The following is a 120-amino-acid chain: MTAPETPAAQHAEPAIAVERIRTALLGYRIMAWTTGLWLIALCYEIVVRYVVKVDNPPTWIGVVHGWVYFTYLLLTLNLAVKVRWPLGKTAGVLLAGTIPLLGIVVEHFQTKEIKARFGL.

3 consecutive transmembrane segments (helical) span residues 24–44 (ALLGYRIMAWTTGLWLIALCY), 61–81 (IGVVHGWVYFTYLLLTLNLAV), and 86–106 (PLGKTAGVLLAGTIPLLGIVV).

To M.leprae ML1176.

It is found in the cell membrane. This is an uncharacterized protein from Mycobacterium bovis (strain ATCC BAA-935 / AF2122/97).